We begin with the raw amino-acid sequence, 314 residues long: Nodulation protein D 1 (314 aa).

Positions 6–63 (LDLNLLVALDALMTERNLTAAARQINLSQPAMSAAIARLRSYFRDELFTMRGRELVPT) constitute an HTH lysR-type domain. A DNA-binding region (H-T-H motif) is located at residues 23 to 42 (LTAAARQINLSQPAMSAAIA).

The protein belongs to the LysR transcriptional regulatory family.

In terms of biological role, nodD regulates the expression of the nodABCFE genes which encode other nodulation proteins. NodD is also a negative regulator of its own expression. Binds flavonoids as inducers. This chain is Nodulation protein D 1 (nodD1), found in Bradyrhizobium elkanii.